The sequence spans 88 residues: UPF0223 protein RBAM_014500 (88 aa).

This sequence belongs to the UPF0223 family.

This chain is UPF0223 protein RBAM_014500, found in Bacillus velezensis (strain DSM 23117 / BGSC 10A6 / LMG 26770 / FZB42) (Bacillus amyloliquefaciens subsp. plantarum).